The primary structure comprises 563 residues: MAVSSFQCPTIFSSSSISGFQCRSDPDLVGSPVGGSSRRRVHASAGISSSFTGDAGLSSRILRFPPNFVRQLSIKARRNCSNIGVAQIVAAKWSNNPSSALPSAAAAAATSSASAVSSAASAAAASSAAAAPVAAAPPVVLKSVDEEVVVAEEGIREKIGSVQLTDSKHSFLSSDGSLTVHAGERLGRGIVTDAITTPVVNTSAYFFKKTAELIDFKEKRSVSFEYGRYGNPTTVVLEDKISALEGAESTLVMASGMCASTVMLLALVPAGGHIVTTTDCYRKTRIFMENFLPKLGITVTVIDPADIAGLEAAVNEFKVSLFFTESPTNPFLRCVDIELVSKICHKRGTLVCIDGTFATPLNQKALALGADLVVHSATKYIGGHNDVLAGCICGSLKLVSEIRNLHHVLGGTLNPNAAYLIIRGMKTLHLRVQQQNSTAFRMAEILEAHPKVSHVYYPGLPSHPEHELAKRQMTGFGGVVSFEIDGDIETTIKFVDSLKIPYIAPSFGGCESIVDQPAIMSYWDLPQEERLKYGIKDNLVRFSFGVEDFEDVKADILQALEAI.

The N-terminal 68 residues, 1 to 68 (MAVSSFQCPT…SRILRFPPNF (68 aa)), are a transit peptide targeting the chloroplast. The pyridoxal 5'-phosphate site is built by Tyr226, Arg228, Gly256, Met257, Tyr281, Ser376, and Thr378. Position 379 is an N6-(pyridoxal phosphate)lysine (Lys379).

Belongs to the trans-sulfuration enzymes family. Requires pyridoxal 5'-phosphate as cofactor.

The protein localises to the plastid. The protein resides in the chloroplast. It catalyses the reaction O-phospho-L-homoserine + L-cysteine = L,L-cystathionine + phosphate. It carries out the reaction O-succinyl-L-homoserine + L-cysteine = L,L-cystathionine + succinate + H(+). Its pathway is amino-acid biosynthesis; L-methionine biosynthesis via de novo pathway; L-cystathionine from O-succinyl-L-homoserine: step 1/1. Inhibited by propargylglycine. Its function is as follows. Catalyzes the first committed step of methionine (Met) biosynthesis. Catalyzes the formation of L-cystathionine from homoserine esters and L-cysteine, via a gamma-replacement reaction. Substrate preference for cystathionine synthesis is O-phospho-L-homoserine (OPH) &gt; O(4)-succinyl-L-homoserine (OSH) &gt;&gt; O-acetyl-L-homoserine (OAH). Is able, at extremely low rate, to catalyze a gamma-elimination of OPH in the absence of cysteine to produce inorganic phosphate (Pi), 2-oxobutanoate and ammonia. The sequence is that of Cystathionine gamma-synthase 1, chloroplastic from Arabidopsis thaliana (Mouse-ear cress).